We begin with the raw amino-acid sequence, 338 residues long: Aspartate--ammonia ligase (338 aa).

Belongs to the class-II aminoacyl-tRNA synthetase family. AsnA subfamily.

Its subcellular location is the cytoplasm. It carries out the reaction L-aspartate + NH4(+) + ATP = L-asparagine + AMP + diphosphate + H(+). It functions in the pathway amino-acid biosynthesis; L-asparagine biosynthesis; L-asparagine from L-aspartate (ammonia route): step 1/1. In Lactobacillus delbrueckii subsp. bulgaricus (strain ATCC BAA-365 / Lb-18), this protein is Aspartate--ammonia ligase.